Here is a 118-residue protein sequence, read N- to C-terminus: Small ribosomal subunit protein uS13 (118 aa).

Residues arginine 93 to lysine 118 form a disordered region.

This sequence belongs to the universal ribosomal protein uS13 family. As to quaternary structure, part of the 30S ribosomal subunit. Forms a loose heterodimer with protein S19. Forms two bridges to the 50S subunit in the 70S ribosome.

Functionally, located at the top of the head of the 30S subunit, it contacts several helices of the 16S rRNA. In the 70S ribosome it contacts the 23S rRNA (bridge B1a) and protein L5 of the 50S subunit (bridge B1b), connecting the 2 subunits; these bridges are implicated in subunit movement. Contacts the tRNAs in the A and P-sites. This chain is Small ribosomal subunit protein uS13, found in Pseudomonas fluorescens (strain Pf0-1).